The chain runs to 2180 residues: DNA polymerase epsilon catalytic subunit A (2180 aa).

4 residues coordinate Zn(2+): cysteine 2067, cysteine 2070, cysteine 2089, and cysteine 2092. The segment at 2067-2092 (CENCAYFSDLDICMSDLRSMFKCSKC) adopts a CysA-type zinc-finger fold. Residues cysteine 2123, cysteine 2126, cysteine 2138, and cysteine 2140 each contribute to the [4Fe-4S] cluster site. Residues 2123–2140 (CAKCRKIKSDTMSAYCTC) carry the CysB motif motif.

The protein belongs to the DNA polymerase type-B family. In terms of assembly, heterotetramer. Consists of 4 subunits: POL2, DPB2, DPB3 and DPB4. [4Fe-4S] cluster serves as cofactor.

The protein resides in the nucleus. It carries out the reaction DNA(n) + a 2'-deoxyribonucleoside 5'-triphosphate = DNA(n+1) + diphosphate. Functionally, DNA polymerase II participates in chromosomal DNA replication. The chain is DNA polymerase epsilon catalytic subunit A (POL2) from Eremothecium gossypii (strain ATCC 10895 / CBS 109.51 / FGSC 9923 / NRRL Y-1056) (Yeast).